Consider the following 265-residue polypeptide: DNA repair protein RecO (265 aa).

The protein belongs to the RecO family.

Its function is as follows. Involved in DNA repair and RecF pathway recombination. The protein is DNA repair protein RecO of Mycolicibacterium paratuberculosis (strain ATCC BAA-968 / K-10) (Mycobacterium paratuberculosis).